The chain runs to 171 residues: MIILVMLNTRFFNPYCFQPSSSLCRPSYSLFSGILACISSSKILPFENFFKSTLLGGFFTVVGHSLCRYLSCHYLPSSHRLTGKQRFSHSQSLFPPHPLCFLRRCCYYLLRLGKVTLEGSLWYRPNPLAFFPWKELKDGSFTTSVGSALFDIGDWFGFLSFMSYSCDMPTP.

This is an uncharacterized protein from Saccharomyces cerevisiae (strain ATCC 204508 / S288c) (Baker's yeast).